The sequence spans 228 residues: Ribosomal RNA small subunit methyltransferase G (228 aa).

Residues Gly-89, Leu-94, 140-141 (VE), and Arg-159 contribute to the S-adenosyl-L-methionine site.

The protein belongs to the methyltransferase superfamily. RNA methyltransferase RsmG family.

It localises to the cytoplasm. The catalysed reaction is guanosine(527) in 16S rRNA + S-adenosyl-L-methionine = N(7)-methylguanosine(527) in 16S rRNA + S-adenosyl-L-homocysteine. In terms of biological role, specifically methylates the N7 position of guanine in position 527 of 16S rRNA. The polypeptide is Ribosomal RNA small subunit methyltransferase G (Burkholderia ambifaria (strain ATCC BAA-244 / DSM 16087 / CCUG 44356 / LMG 19182 / AMMD) (Burkholderia cepacia (strain AMMD))).